Consider the following 210-residue polypeptide: Helix-loop-helix protein 26 (210 aa).

Positions 1–15 (MSSSPTSSSSGSPSS) are enriched in low complexity. Residues 1–33 (MSSSPTSSSSGSPSSHGHRSETEKQRRDDTNDL) are disordered. The bHLH domain occupies 14-65 (SSHGHRSETEKQRRDDTNDLLNEFKKIVQKSESEKLSKEEVLFRIVKLLSGI). Positions 18-33 (HRSETEKQRRDDTNDL) are enriched in basic and acidic residues.

In terms of assembly, homodimer; binds to DNA as a homodimer. In terms of tissue distribution, expressed in intestinal cells (at protein level).

It is found in the nucleus. Functionally, as a homodimer binds DNA via the E-box sequence 5'-CACGTG-3'. Represses lag-2 transcription during embryogenesis via Notch signaling, in an unc-37-dependent manner. Also represses tbx-37 independent of Notch signaling. In the intestine, plays a role in probiotic-mediated protection against infections by pathogens such as S.enterica. This is most likely by positively regulating the expression of genes such as bar-1 upon exposure to probiotic bacteria such as the E.faecium. This is Helix-loop-helix protein 26 from Caenorhabditis elegans.